We begin with the raw amino-acid sequence, 439 residues long: tRNA-2-methylthio-N(6)-dimethylallyladenosine synthase (439 aa).

The MTTase N-terminal domain maps to 2-119 (KKLYLKTHGC…LPDLLDSVIQ (118 aa)). C11, C48, C82, C156, C160, and C163 together coordinate [4Fe-4S] cluster. The Radical SAM core domain occupies 142–374 (RAEGPSAFVS…QNRINVKAAE (233 aa)). Residues 377–439 (QSMVGTQQRI…RPYSLWGEIC (63 aa)) form the TRAM domain.

This sequence belongs to the methylthiotransferase family. MiaB subfamily. In terms of assembly, monomer. It depends on [4Fe-4S] cluster as a cofactor.

It localises to the cytoplasm. It carries out the reaction N(6)-dimethylallyladenosine(37) in tRNA + (sulfur carrier)-SH + AH2 + 2 S-adenosyl-L-methionine = 2-methylsulfanyl-N(6)-dimethylallyladenosine(37) in tRNA + (sulfur carrier)-H + 5'-deoxyadenosine + L-methionine + A + S-adenosyl-L-homocysteine + 2 H(+). Catalyzes the methylthiolation of N6-(dimethylallyl)adenosine (i(6)A), leading to the formation of 2-methylthio-N6-(dimethylallyl)adenosine (ms(2)i(6)A) at position 37 in tRNAs that read codons beginning with uridine. The sequence is that of tRNA-2-methylthio-N(6)-dimethylallyladenosine synthase from Coxiella burnetii (strain Dugway 5J108-111).